Reading from the N-terminus, the 403-residue chain is Argininosuccinate synthase (403 aa).

Residue 9-17 (AYSGGLDTS) participates in ATP binding. Tyrosine 86 is a binding site for L-citrulline. Glycine 116 is an ATP binding site. L-aspartate is bound by residues threonine 118, asparagine 122, and aspartate 123. Asparagine 122 is an L-citrulline binding site. The L-citrulline site is built by arginine 126, serine 174, glutamate 259, and tyrosine 271.

Belongs to the argininosuccinate synthase family. Type 1 subfamily. Homotetramer.

The protein localises to the cytoplasm. It catalyses the reaction L-citrulline + L-aspartate + ATP = 2-(N(omega)-L-arginino)succinate + AMP + diphosphate + H(+). It participates in amino-acid biosynthesis; L-arginine biosynthesis; L-arginine from L-ornithine and carbamoyl phosphate: step 2/3. This is Argininosuccinate synthase from Ligilactobacillus salivarius (strain UCC118) (Lactobacillus salivarius).